The chain runs to 93 residues: Large ribosomal subunit protein uL23 (93 aa).

It belongs to the universal ribosomal protein uL23 family. As to quaternary structure, part of the 50S ribosomal subunit. Contacts protein L29, and trigger factor when it is bound to the ribosome.

One of the early assembly proteins it binds 23S rRNA. One of the proteins that surrounds the polypeptide exit tunnel on the outside of the ribosome. Forms the main docking site for trigger factor binding to the ribosome. The protein is Large ribosomal subunit protein uL23 of Campylobacter jejuni subsp. jejuni serotype O:6 (strain 81116 / NCTC 11828).